Consider the following 353-residue polypeptide: UDP-3-O-acylglucosamine N-acyltransferase (353 aa).

The active-site Proton acceptor is histidine 242.

The protein belongs to the transferase hexapeptide repeat family. LpxD subfamily. Homotrimer.

The catalysed reaction is a UDP-3-O-[(3R)-3-hydroxyacyl]-alpha-D-glucosamine + a (3R)-hydroxyacyl-[ACP] = a UDP-2-N,3-O-bis[(3R)-3-hydroxyacyl]-alpha-D-glucosamine + holo-[ACP] + H(+). Its pathway is bacterial outer membrane biogenesis; LPS lipid A biosynthesis. Catalyzes the N-acylation of UDP-3-O-acylglucosamine using 3-hydroxyacyl-ACP as the acyl donor. Is involved in the biosynthesis of lipid A, a phosphorylated glycolipid that anchors the lipopolysaccharide to the outer membrane of the cell. The sequence is that of UDP-3-O-acylglucosamine N-acyltransferase from Pseudomonas aeruginosa (strain UCBPP-PA14).